The chain runs to 230 residues: GDT1-like protein 4 (230 aa).

6 consecutive transmembrane segments (helical) span residues 12–32 (LAMTFVSEIGDKTFFAAAILA), 39–59 (LVLAGCLSALIVMTILSATLG), 71–91 (THHITTLLFFGFGLWSLWDGF), 135–155 (AFLTQFFSPIFLKAFSINFFG), 175–195 (FGVVLGGVVAQFLCTTAAVIG), and 207–227 (IVALSGGMLFIIFGIQSYLTS).

This sequence belongs to the GDT1 family.

It is found in the membrane. In Arabidopsis thaliana (Mouse-ear cress), this protein is GDT1-like protein 4.